An 875-amino-acid chain; its full sequence is Translation initiation factor IF-2 (875 aa).

Disordered stretches follow at residues 123–204 (EKEK…EKPK) and 240–278 (ETKEEKAELEALRKLMGPQPKKKKKKKKKKEEEKAPVET). Basic and acidic residues predominate over residues 240–252 (ETKEEKAELEALR). A compositionally biased stretch (basic residues) spans 259–268 (PKKKKKKKKK). Residues 269 to 278 (KEEEKAPVET) show a composition bias toward basic and acidic residues. Residues 379–547 (ERPPVVTVMG…NILLVSEILE (169 aa)) form the tr-type G domain. The segment at 388–395 (GHVDHGKT) is G1. 388-395 (GHVDHGKT) contributes to the GTP binding site. Positions 413-417 (GITQH) are G2. The segment at 435 to 438 (DTPG) is G3. Residues 435–439 (DTPGH) and 489–492 (NKID) each bind GTP. A G4 region spans residues 489–492 (NKID). The G5 stretch occupies residues 525-527 (SAK).

It belongs to the TRAFAC class translation factor GTPase superfamily. Classic translation factor GTPase family. IF-2 subfamily.

It localises to the cytoplasm. One of the essential components for the initiation of protein synthesis. Protects formylmethionyl-tRNA from spontaneous hydrolysis and promotes its binding to the 30S ribosomal subunits. Also involved in the hydrolysis of GTP during the formation of the 70S ribosomal complex. The chain is Translation initiation factor IF-2 from Persephonella marina (strain DSM 14350 / EX-H1).